The primary structure comprises 147 residues: Hemoglobin subunit epsilon (147 aa).

The region spanning His-3–His-147 is the Globin domain. A phosphoserine mark is found at Ser-14 and Ser-51. The heme b site is built by His-64 and His-93.

This sequence belongs to the globin family. As to quaternary structure, heterotetramer of two alpha chains and two epsilon chains in early embryonic hemoglobin Gower-2; two zeta chains and two epsilon chains in early embryonic hemoglobin Gower-1. As to expression, red blood cells.

Functionally, the epsilon chain is a beta-type chain of early mammalian embryonic hemoglobin. The protein is Hemoglobin subunit epsilon (HBE1) of Eulemur fulvus fulvus (Brown lemur).